A 271-amino-acid polypeptide reads, in one-letter code: Aquaporin-2 (271 aa).

At 1–11 (MWELRSIAFSR) the chain is on the cytoplasmic side. A helical transmembrane segment spans residues 12–32 (AVLAEFLATLLFVFFGLGSAL). The Extracellular portion of the chain corresponds to 33–40 (NWPQALPS). Residues 41-59 (VLQIAMAFGLAIGTLVQAL) traverse the membrane as a helical segment. Residues 60–64 (GHVSG) lie on the Cytoplasmic side of the membrane. Positions 65-74 (AHINPAVTVA) form an intramembrane region, discontinuously helical. An NPA 1 motif is present at residues 68–70 (NPA). Residues 75–85 (CLVGCHVSFLR) are Cytoplasmic-facing. The chain crosses the membrane as a helical span at residues 86–107 (AVFYVAAQLLGAVAGAALLHEI). Topologically, residues 108–127 (TPPAIRGDLAVNALNNNSTA) are extracellular. N123 and N124 each carry an N-linked (GlcNAc...) asparagine glycan. The helical transmembrane segment at 128–148 (GQAVTVELFLTLQLVLCIFPS) threads the bilayer. The Cytoplasmic portion of the chain corresponds to 149–156 (TDKRRGKQ). Residues 157 to 176 (LGHPALSIGFSVALGHLLGI) traverse the membrane as a helical segment. Residues 177 to 180 (HYTG) are Extracellular-facing. The discontinuously helical intramembrane region spans 181 to 193 (CSMNPARSLAPAI). The short motif at 184–186 (NPA) is the NPA 2 element. Residues 194 to 201 (VTGKFDDH) are Extracellular-facing. A helical transmembrane segment spans residues 202-222 (WVFWIGPLVGAIVASLLYNYV). Residues 223-271 (LFPPAKSLSERLAVLKGLEPDTDWEEREVRRRQSVELHSPQSLPRGTKA) are Cytoplasmic-facing. The segment at 249–271 (REVRRRQSVELHSPQSLPRGTKA) is disordered. S256 carries the post-translational modification Phosphoserine. The segment covering 261–271 (SPQSLPRGTKA) has biased composition (polar residues).

Belongs to the MIP/aquaporin (TC 1.A.8) family. In terms of assembly, homotetramer. Ser-256 phosphorylation is necessary and sufficient for expression at the apical membrane. Endocytosis is not phosphorylation-dependent. Post-translationally, N-glycosylated. As to expression, expressed in renal collecting tubules.

The protein localises to the apical cell membrane. Its subcellular location is the basolateral cell membrane. The protein resides in the cell membrane. It is found in the cytoplasmic vesicle membrane. It localises to the golgi apparatus. The protein localises to the trans-Golgi network membrane. The catalysed reaction is H2O(in) = H2O(out). The enzyme catalyses glycerol(in) = glycerol(out). Forms a water-specific channel that provides the plasma membranes of renal collecting duct with high permeability to water, thereby permitting water to move in the direction of an osmotic gradient. Could also be permeable to glycerol. The protein is Aquaporin-2 of Ovis aries (Sheep).